The sequence spans 244 residues: Claudin-12 (244 aa).

Residues Met1–Thr10 are Cytoplasmic-facing. A helical transmembrane segment spans residues Val11–Pro31. Topologically, residues Asn32 to Gln87 are extracellular. A helical transmembrane segment spans residues Phe88–Met108. Over Cys109–Val135 the chain is Cytoplasmic. The chain crosses the membrane as a helical span at residues Ala136–Phe156. Over Tyr157–Ala174 the chain is Extracellular. The helical transmembrane segment at Val175–Trp195 threads the bilayer. Residues Tyr196–Thr244 are Cytoplasmic-facing. 2 positions are modified to phosphoserine: Ser228 and Ser231.

Belongs to the claudin family. Interacts with OCLN.

Its subcellular location is the cell junction. It localises to the tight junction. The protein resides in the cell membrane. Functionally, plays a major role in tight junction-specific obliteration of the intercellular space, through calcium-independent cell-adhesion activity. The chain is Claudin-12 (CLDN12) from Pongo abelii (Sumatran orangutan).